The sequence spans 254 residues: Bowman-Birk type bran trypsin inhibitor (254 aa).

Positions 1-22 (MSNTTMATSTILLFLLAGLAAA) are cleaved as a signal peptide. Residues 23–118 (HGDGDTTIRL…KCTAALDGLS (96 aa)) constitute a propeptide that is removed on maturation. Repeats lie at residues 46–120 (KPWD…LSME), 121–187 (RPWK…FCTP), and 188–251 (RPWG…CKPR). Cystine bridges form between Cys125/Cys185, Cys126/Cys143, Cys152/Cys159, Cys156/Cys172, Cys193/Cys248, Cys194/Cys209, Cys199/Cys207, Cys216/Cys223, and Cys220/Cys236. Residues 252 to 254 (AEN) constitute a propeptide that is removed on maturation.

Belongs to the Bowman-Birk serine protease inhibitor family.

In Oryza sativa subsp. japonica (Rice), this protein is Bowman-Birk type bran trypsin inhibitor (RBBI3.3).